A 152-amino-acid polypeptide reads, in one-letter code: Stigma-specific STIG1-like protein 1 (152 aa).

Residues 1–19 (MAFVKLLVSIAITTAITIA) form the signal peptide.

Belongs to the STIG1 family.

The chain is Stigma-specific STIG1-like protein 1 from Arabidopsis thaliana (Mouse-ear cress).